The chain runs to 796 residues: Polyribonucleotide nucleotidyltransferase (796 aa).

Residues aspartate 490 and aspartate 496 each coordinate Mg(2+). The region spanning 557–616 is the KH domain; sequence PRIESIFINKDKIRNVIGSGGKNIRDICEKTGAKIEIIQDGTVMIYAVNNEAVEYAKSMI. One can recognise an S1 motif domain in the interval 626-693; sequence GKVFEGTVVE…DREHVQLSMR (68 aa). The segment covering 714–736 has biased composition (low complexity); sequence SFSDDSSSSGTSSSGSSFKESYS. Residues 714–796 are disordered; that stretch reads SFSDDSSSSG…HEVPRKPRFF (83 aa). A compositionally biased stretch (basic residues) spans 740 to 755; sequence HGSHEKRRSGGSRSSR. The span at 771–784 shows a compositional bias: low complexity; that stretch reads SDFGNNNRSFSNSR. Basic and acidic residues predominate over residues 785 to 796; the sequence is NGHEVPRKPRFF.

It belongs to the polyribonucleotide nucleotidyltransferase family. The cofactor is Mg(2+).

The protein localises to the cytoplasm. The catalysed reaction is RNA(n+1) + phosphate = RNA(n) + a ribonucleoside 5'-diphosphate. Functionally, involved in mRNA degradation. Catalyzes the phosphorolysis of single-stranded polyribonucleotides processively in the 3'- to 5'-direction. The protein is Polyribonucleotide nucleotidyltransferase of Ehrlichia canis (strain Jake).